A 529-amino-acid polypeptide reads, in one-letter code: Bifunctional purine biosynthesis protein PurH (529 aa).

The MGS-like domain maps to Met1–Val148.

Belongs to the PurH family.

It catalyses the reaction (6R)-10-formyltetrahydrofolate + 5-amino-1-(5-phospho-beta-D-ribosyl)imidazole-4-carboxamide = 5-formamido-1-(5-phospho-D-ribosyl)imidazole-4-carboxamide + (6S)-5,6,7,8-tetrahydrofolate. The catalysed reaction is IMP + H2O = 5-formamido-1-(5-phospho-D-ribosyl)imidazole-4-carboxamide. It participates in purine metabolism; IMP biosynthesis via de novo pathway; 5-formamido-1-(5-phospho-D-ribosyl)imidazole-4-carboxamide from 5-amino-1-(5-phospho-D-ribosyl)imidazole-4-carboxamide (10-formyl THF route): step 1/1. The protein operates within purine metabolism; IMP biosynthesis via de novo pathway; IMP from 5-formamido-1-(5-phospho-D-ribosyl)imidazole-4-carboxamide: step 1/1. This chain is Bifunctional purine biosynthesis protein PurH, found in Serratia proteamaculans (strain 568).